The primary structure comprises 249 residues: Type I iodothyronine deiodinase (249 aa).

Over 1–12 (MGLPQPGLWLKR) the chain is Extracellular. Residues 13–33 (LWVLLEVAVHVVVGKVLLILF) traverse the membrane as a helical; Signal-anchor for type III membrane protein segment. Residues 34 to 249 (PDRVKRNILA…VRAVLEKLHS (216 aa)) lie on the Cytoplasmic side of the membrane. Residue selenocysteine 126 is part of the active site. Position 126 (selenocysteine 126) is a non-standard amino acid, selenocysteine.

This sequence belongs to the iodothyronine deiodinase family. Predominantly monomer. Can form homodimers but homodimerization is not essential for enzyme activity.

The protein resides in the cell membrane. The protein localises to the endoplasmic reticulum membrane. Its subcellular location is the basolateral cell membrane. It catalyses the reaction 3,3',5-triiodo-L-thyronine + iodide + A + H(+) = L-thyroxine + AH2. The catalysed reaction is 3,3',5'-triiodo-L-thyronine + iodide + A + H(+) = L-thyroxine + AH2. The enzyme catalyses 3,3'-diiodo-L-thyronine + iodide + A + H(+) = 3,3',5'-triiodo-L-thyronine + AH2. It carries out the reaction 3,3'-diiodo-L-thyronine + iodide + A + H(+) = 3,3',5-triiodo-L-thyronine + AH2. It catalyses the reaction 3'-iodo-L-thyronine + iodide + A + H(+) = 3',5'-diiodo-L-thyronine + AH2. The catalysed reaction is 3-iodo-L-thyronine + iodide + A + H(+) = 3,5-diiodo-L-thyronine + AH2. The enzyme catalyses 3-iodo-L-thyronine + iodide + A + H(+) = 3,3'-diiodo-L-thyronine + AH2. It carries out the reaction 3,3'-diiodothyronamine + iodide + A + H(+) = 3,3',5'-triiodothyronamine + AH2. It catalyses the reaction 3'-iodothyronamine + iodide + A + H(+) = 3',5'-diiodothyronamine + AH2. The catalysed reaction is 3-iodothyronamine + iodide + A + H(+) = 3,3'-diiodothyronamine + AH2. The enzyme catalyses 3,3'-diiodothyronamine + iodide + A + H(+) = 3,3',5-triiodothyronamine + AH2. It carries out the reaction 3-iodothyronamine + iodide + A + H(+) = 3,5-diiodothyronamine + AH2. It catalyses the reaction 3,3'-diiodo-L-thyronine sulfate + iodide + A + H(+) = 3,3',5'-triiodo-L-thyronine sulfate + AH2. The catalysed reaction is 3,3',5'-triiodo-L-thyronine sulfate + iodide + A + H(+) = L-thyroxine sulfate + AH2. The enzyme catalyses 3,3'-diiodo-L-thyronine sulfate + iodide + A + H(+) = 3,3',5-triiodo-L-thyronine sulfate + AH2. Deiodination of substrates 3,3',5'-triiodothyronine, 3,3',5'-triiodothyronamine and 3',5'- diiodothyronamine are inhibited by 6n-propyl-2-thiouracil (PTU). Functionally, plays a crucial role in the metabolism of thyroid hormones (TH) and has specific roles in TH activation and inactivation by deiodination. Catalyzes the deiodination of L-thyroxine (T4) to 3,5,3'-triiodothyronine (T3), 3,3',5'-triiodothyronine (rT3) to 3,3'-diiodothyronine (3,3'-T2) and 3',5'-diiodothyronine (3',5'-T2) to 3'-monoiodothyronine (3'-T1) via outer-ring deiodination (ORD). Catalyzes the deiodination of T4 to 3,3',5'-triiodothyronine (rT3) via inner-ring deiodination (IRD). Catalyzes the deiodination of T3 to 3,3'-T2, 3,5-diiodothyronine (3,5-T2) to 3- monoiodothyronine (3-T1) and 3,3'-T2 to 3-T1 via IRD. Catalyzes the phenolic ring deiodinations of 3,3',5'-triiodothyronamine and 3',5'-diiodothyronamine. Catalyzes the phenolic ring deiodination of 3,3'-diiodothyronamine and tyrosyl ring deiodinations of 3,5,3'-triiodothyronamine and 3,5-diiodothyronamine. Catalyzes the deiodination of L-thyroxine sulfate and 3,3',5-triiodo-L-thyronine sulfate via IRD and of 3,3',5'-triiodo-L-thyronine sulfate via ORD. This is Type I iodothyronine deiodinase (DIO1) from Homo sapiens (Human).